The chain runs to 457 residues: Argininosuccinate lyase (457 aa).

The protein belongs to the lyase 1 family. Argininosuccinate lyase subfamily.

The protein resides in the cytoplasm. It carries out the reaction 2-(N(omega)-L-arginino)succinate = fumarate + L-arginine. It participates in amino-acid biosynthesis; L-arginine biosynthesis; L-arginine from L-ornithine and carbamoyl phosphate: step 3/3. This chain is Argininosuccinate lyase, found in Shigella dysenteriae serotype 1 (strain Sd197).